Consider the following 486-residue polypeptide: Glutamate--tRNA ligase (486 aa).

The 'HIGH' region signature appears at 12 to 22; that stretch reads PSPTGTPHVGL. Residues 256-260 carry the 'KMSKS' region motif; it reads KLSKR. Position 259 (Lys259) interacts with ATP.

Belongs to the class-I aminoacyl-tRNA synthetase family. Glutamate--tRNA ligase type 1 subfamily. As to quaternary structure, monomer.

It is found in the cytoplasm. It carries out the reaction tRNA(Glu) + L-glutamate + ATP = L-glutamyl-tRNA(Glu) + AMP + diphosphate. Functionally, catalyzes the attachment of glutamate to tRNA(Glu) in a two-step reaction: glutamate is first activated by ATP to form Glu-AMP and then transferred to the acceptor end of tRNA(Glu). The sequence is that of Glutamate--tRNA ligase from Mycolicibacterium smegmatis (strain ATCC 700084 / mc(2)155) (Mycobacterium smegmatis).